The sequence spans 290 residues: Protein translocase subunit SecF (290 aa).

6 consecutive transmembrane segments (helical) span residues 15–35 (VFMI…FTKG), 131–151 (KAIL…TVRF), 156–176 (AISA…IFAI), 184–204 (SFIA…IIVF), 234–256 (TLYT…GVVL), and 260–282 (ILAI…SAIL).

This sequence belongs to the SecD/SecF family. SecF subfamily. In terms of assembly, forms a complex with SecD. Part of the essential Sec protein translocation apparatus which comprises SecA, SecYEG and auxiliary proteins SecDF. Other proteins may also be involved.

It is found in the cell inner membrane. Its function is as follows. Part of the Sec protein translocase complex. Interacts with the SecYEG preprotein conducting channel. SecDF uses the proton motive force (PMF) to complete protein translocation after the ATP-dependent function of SecA. The polypeptide is Protein translocase subunit SecF (Dictyoglomus turgidum (strain DSM 6724 / Z-1310)).